Consider the following 555-residue polypeptide: GPI-anchor transamidase component PIGS (555 aa).

Over Ala2 to Arg18 the chain is Cytoplasmic. The a cardiolipin site is built by Arg15 and Arg18. The helical transmembrane segment at Ala19 to Thr39 threads the bilayer. Residues Glu40–Gln517 are Lumenal-facing. 2 N-linked (GlcNAc...) asparagine glycosylation sites follow: Asn267 and Asn370. A helical membrane pass occupies residues Lys518–Pro532. Over Ile533–Asp555 the chain is Cytoplasmic.

It belongs to the PIGS family. As to quaternary structure, heteropentamer. Part of the GPI-anchor transamidase complex, consisting of PIGK, PIGT, PIGS, PIGU and GAA1.

The protein resides in the endoplasmic reticulum membrane. The protein operates within glycolipid biosynthesis; glycosylphosphatidylinositol-anchor biosynthesis. Component of the glycosylphosphatidylinositol-anchor (GPI-anchor) transamidase (GPI-T) complex that catalyzes the formation of the linkage between a proprotein and a GPI-anchor and participates in GPI anchored protein biosynthesis. The chain is GPI-anchor transamidase component PIGS from Rattus norvegicus (Rat).